Consider the following 129-residue polypeptide: Small ribosomal subunit protein uS11 (129 aa).

This sequence belongs to the universal ribosomal protein uS11 family. As to quaternary structure, part of the 30S ribosomal subunit. Interacts with proteins S7 and S18. Binds to IF-3.

Functionally, located on the platform of the 30S subunit, it bridges several disparate RNA helices of the 16S rRNA. Forms part of the Shine-Dalgarno cleft in the 70S ribosome. The chain is Small ribosomal subunit protein uS11 from Hydrogenovibrio crunogenus (strain DSM 25203 / XCL-2) (Thiomicrospira crunogena).